Here is a 1209-residue protein sequence, read N- to C-terminus: DNA-directed RNA polymerase subunit beta' (1209 aa).

Zn(2+) contacts are provided by Cys60, Cys62, Cys75, and Cys78. Positions 450, 452, and 454 each coordinate Mg(2+). Zn(2+) is bound by residues Cys819, Cys893, Cys900, and Cys903.

Belongs to the RNA polymerase beta' chain family. The RNAP catalytic core consists of 2 alpha, 1 beta, 1 beta' and 1 omega subunit. When a sigma factor is associated with the core the holoenzyme is formed, which can initiate transcription. The cofactor is Mg(2+). Zn(2+) is required as a cofactor.

It catalyses the reaction RNA(n) + a ribonucleoside 5'-triphosphate = RNA(n+1) + diphosphate. Its function is as follows. DNA-dependent RNA polymerase catalyzes the transcription of DNA into RNA using the four ribonucleoside triphosphates as substrates. In Streptococcus mutans serotype c (strain ATCC 700610 / UA159), this protein is DNA-directed RNA polymerase subunit beta'.